The chain runs to 307 residues: Protease HtpX homolog (307 aa).

A helical membrane pass occupies residues Leu-16–Val-36. Zn(2+) is bound at residue His-130. Glu-131 is a catalytic residue. A Zn(2+)-binding site is contributed by His-134. A run of 2 helical transmembrane segments spans residues Ile-145–Gly-165 and Gly-172–Val-192. Residue Glu-201 coordinates Zn(2+). The tract at residues Ala-278–Gly-307 is disordered.

It belongs to the peptidase M48B family. It depends on Zn(2+) as a cofactor.

It is found in the cell inner membrane. The chain is Protease HtpX homolog from Nitrobacter hamburgensis (strain DSM 10229 / NCIMB 13809 / X14).